We begin with the raw amino-acid sequence, 94 residues long: Aspartyl/glutamyl-tRNA(Asn/Gln) amidotransferase subunit C (94 aa).

This sequence belongs to the GatC family. In terms of assembly, heterotrimer of A, B and C subunits.

It catalyses the reaction L-glutamyl-tRNA(Gln) + L-glutamine + ATP + H2O = L-glutaminyl-tRNA(Gln) + L-glutamate + ADP + phosphate + H(+). It carries out the reaction L-aspartyl-tRNA(Asn) + L-glutamine + ATP + H2O = L-asparaginyl-tRNA(Asn) + L-glutamate + ADP + phosphate + 2 H(+). Functionally, allows the formation of correctly charged Asn-tRNA(Asn) or Gln-tRNA(Gln) through the transamidation of misacylated Asp-tRNA(Asn) or Glu-tRNA(Gln) in organisms which lack either or both of asparaginyl-tRNA or glutaminyl-tRNA synthetases. The reaction takes place in the presence of glutamine and ATP through an activated phospho-Asp-tRNA(Asn) or phospho-Glu-tRNA(Gln). The chain is Aspartyl/glutamyl-tRNA(Asn/Gln) amidotransferase subunit C from Desulfatibacillum aliphaticivorans.